The following is a 245-amino-acid chain: 1-(5-phosphoribosyl)-5-[(5-phosphoribosylamino)methylideneamino] imidazole-4-carboxamide isomerase (245 aa).

The Proton acceptor role is filled by D11. The active-site Proton donor is the D132.

It belongs to the HisA/HisF family.

It is found in the cytoplasm. The catalysed reaction is 1-(5-phospho-beta-D-ribosyl)-5-[(5-phospho-beta-D-ribosylamino)methylideneamino]imidazole-4-carboxamide = 5-[(5-phospho-1-deoxy-D-ribulos-1-ylimino)methylamino]-1-(5-phospho-beta-D-ribosyl)imidazole-4-carboxamide. It participates in amino-acid biosynthesis; L-histidine biosynthesis; L-histidine from 5-phospho-alpha-D-ribose 1-diphosphate: step 4/9. The chain is 1-(5-phosphoribosyl)-5-[(5-phosphoribosylamino)methylideneamino] imidazole-4-carboxamide isomerase from Bacillus velezensis (strain DSM 23117 / BGSC 10A6 / LMG 26770 / FZB42) (Bacillus amyloliquefaciens subsp. plantarum).